The following is a 323-amino-acid chain: Lipoyl synthase (323 aa).

Residues 1 to 14 (MVTILDRTKPDDKR) are compositionally biased toward basic and acidic residues. The segment at 1–25 (MVTILDRTKPDDKRIRHPEKAHKPD) is disordered. [4Fe-4S] cluster contacts are provided by cysteine 61, cysteine 66, cysteine 72, cysteine 87, cysteine 91, cysteine 94, and serine 300. The Radical SAM core domain occupies 73–289 (WEKKHATFMI…EDIAYTKGFL (217 aa)).

It belongs to the radical SAM superfamily. Lipoyl synthase family. [4Fe-4S] cluster serves as cofactor.

It is found in the cytoplasm. The enzyme catalyses [[Fe-S] cluster scaffold protein carrying a second [4Fe-4S](2+) cluster] + N(6)-octanoyl-L-lysyl-[protein] + 2 oxidized [2Fe-2S]-[ferredoxin] + 2 S-adenosyl-L-methionine + 4 H(+) = [[Fe-S] cluster scaffold protein] + N(6)-[(R)-dihydrolipoyl]-L-lysyl-[protein] + 4 Fe(3+) + 2 hydrogen sulfide + 2 5'-deoxyadenosine + 2 L-methionine + 2 reduced [2Fe-2S]-[ferredoxin]. The protein operates within protein modification; protein lipoylation via endogenous pathway; protein N(6)-(lipoyl)lysine from octanoyl-[acyl-carrier-protein]: step 2/2. In terms of biological role, catalyzes the radical-mediated insertion of two sulfur atoms into the C-6 and C-8 positions of the octanoyl moiety bound to the lipoyl domains of lipoate-dependent enzymes, thereby converting the octanoylated domains into lipoylated derivatives. The protein is Lipoyl synthase of Allorhizobium ampelinum (strain ATCC BAA-846 / DSM 112012 / S4) (Agrobacterium vitis (strain S4)).